The primary structure comprises 226 residues: ATP-dependent dethiobiotin synthetase BioD (226 aa).

Position 14 to 19 (14 to 19 (GIGKTF)) interacts with ATP. Thr18 contributes to the Mg(2+) binding site. Lys39 is an active-site residue. Ser43 is a substrate binding site. ATP-binding positions include Asp56, 117 to 120 (EGVG), 177 to 178 (NT), 206 to 208 (PHI), and Asn213. Positions 56 and 117 each coordinate Mg(2+).

This sequence belongs to the dethiobiotin synthetase family. Homodimer. The cofactor is Mg(2+).

It is found in the cytoplasm. The enzyme catalyses (7R,8S)-7,8-diammoniononanoate + CO2 + ATP = (4R,5S)-dethiobiotin + ADP + phosphate + 3 H(+). It functions in the pathway cofactor biosynthesis; biotin biosynthesis; biotin from 7,8-diaminononanoate: step 1/2. Its function is as follows. Catalyzes a mechanistically unusual reaction, the ATP-dependent insertion of CO2 between the N7 and N8 nitrogen atoms of 7,8-diaminopelargonic acid (DAPA, also called 7,8-diammoniononanoate) to form a ureido ring. The chain is ATP-dependent dethiobiotin synthetase BioD from Xylella fastidiosa (strain Temecula1 / ATCC 700964).